Reading from the N-terminus, the 195-residue chain is Holliday junction branch migration complex subunit RuvA (195 aa).

The tract at residues 1 to 64 (MIASIRGVIQ…EDALTLYGFS (64 aa)) is domain I. The domain II stretch occupies residues 65-139 (DNAQRSLFEQ…GKIDFRQLAA (75 aa)). Residues 139-143 (ASGST) are flexible linker. Positions 144–195 (SVSALDRELSEILVSLGYSAAEAAAAIASLPSDAPPTLEERLRLALRYFGSA) are domain III.

This sequence belongs to the RuvA family. As to quaternary structure, homotetramer. Forms an RuvA(8)-RuvB(12)-Holliday junction (HJ) complex. HJ DNA is sandwiched between 2 RuvA tetramers; dsDNA enters through RuvA and exits via RuvB. An RuvB hexamer assembles on each DNA strand where it exits the tetramer. Each RuvB hexamer is contacted by two RuvA subunits (via domain III) on 2 adjacent RuvB subunits; this complex drives branch migration. In the full resolvosome a probable DNA-RuvA(4)-RuvB(12)-RuvC(2) complex forms which resolves the HJ.

The protein resides in the cytoplasm. Functionally, the RuvA-RuvB-RuvC complex processes Holliday junction (HJ) DNA during genetic recombination and DNA repair, while the RuvA-RuvB complex plays an important role in the rescue of blocked DNA replication forks via replication fork reversal (RFR). RuvA specifically binds to HJ cruciform DNA, conferring on it an open structure. The RuvB hexamer acts as an ATP-dependent pump, pulling dsDNA into and through the RuvAB complex. HJ branch migration allows RuvC to scan DNA until it finds its consensus sequence, where it cleaves and resolves the cruciform DNA. The polypeptide is Holliday junction branch migration complex subunit RuvA (Chloroflexus aggregans (strain MD-66 / DSM 9485)).